The sequence spans 305 residues: Ribonuclease BN (305 aa).

Residues H64, H66, D68, H69, H141, D212, and H270 each coordinate Zn(2+). Catalysis depends on D68, which acts as the Proton acceptor.

It belongs to the RNase Z family. RNase BN subfamily. Homodimer. Requires Zn(2+) as cofactor.

Zinc phosphodiesterase, which has both exoribonuclease and endoribonuclease activities. This chain is Ribonuclease BN, found in Salmonella agona (strain SL483).